Here is a 273-residue protein sequence, read N- to C-terminus: 4-hydroxy-tetrahydrodipicolinate reductase (273 aa).

NAD(+) contacts are provided by residues Gly-12–Met-17 and Glu-38. Residue Arg-39 participates in NADP(+) binding. NAD(+)-binding positions include Gly-102–Thr-104 and Ala-126–Phe-129. Residue His-159 is the Proton donor/acceptor of the active site. His-160 contributes to the (S)-2,3,4,5-tetrahydrodipicolinate binding site. The active-site Proton donor is the Lys-163. Residue Gly-169–Thr-170 participates in (S)-2,3,4,5-tetrahydrodipicolinate binding.

Belongs to the DapB family. As to quaternary structure, homotetramer.

The protein localises to the cytoplasm. The enzyme catalyses (S)-2,3,4,5-tetrahydrodipicolinate + NAD(+) + H2O = (2S,4S)-4-hydroxy-2,3,4,5-tetrahydrodipicolinate + NADH + H(+). The catalysed reaction is (S)-2,3,4,5-tetrahydrodipicolinate + NADP(+) + H2O = (2S,4S)-4-hydroxy-2,3,4,5-tetrahydrodipicolinate + NADPH + H(+). Its pathway is amino-acid biosynthesis; L-lysine biosynthesis via DAP pathway; (S)-tetrahydrodipicolinate from L-aspartate: step 4/4. Catalyzes the conversion of 4-hydroxy-tetrahydrodipicolinate (HTPA) to tetrahydrodipicolinate. In Pectobacterium carotovorum subsp. carotovorum (strain PC1), this protein is 4-hydroxy-tetrahydrodipicolinate reductase.